The sequence spans 999 residues: Tyrosine-protein kinase Mer (999 aa).

The first 20 residues, 1–20 (MGPAPLPLLLGLFLPALWRR), serve as a signal peptide directing secretion. Residues 21 to 505 (AITEAREEAK…PGNADPVLII (485 aa)) lie on the Extracellular side of the membrane. Ig-like C2-type domains follow at residues 81-186 (PQVT…EIVS) and 197-273 (PHFT…LTVS). Asparagine 114, asparagine 170, asparagine 207, asparagine 215, asparagine 234, asparagine 294, asparagine 316, asparagine 329, asparagine 336, asparagine 354, asparagine 389, asparagine 395, asparagine 442, and asparagine 454 each carry an N-linked (GlcNAc...) asparagine glycan. Cysteines 115 and 175 form a disulfide. A disulfide bond links cysteine 218 and cysteine 262. Fibronectin type-III domains follow at residues 286–381 (PPTE…TTEG) and 386–484 (APLN…PAHG). A helical membrane pass occupies residues 506–526 (FGCFCGFILIGLILYISLAIR). The Cytoplasmic portion of the chain corresponds to 527–999 (KRVQETKFGN…DSSEGSEVLM (473 aa)). Residue serine 543 is modified to Phosphoserine. The Protein kinase domain maps to 587-858 (LILGKILGEG…VLRLQLEKLL (272 aa)). Residues 593–601 (LGEGEFGSV) and lysine 615 contribute to the ATP site. Catalysis depends on aspartate 723, which acts as the Proton acceptor. Phosphotyrosine; by autocatalysis occurs at positions 749, 753, 754, and 872. At serine 935 the chain carries Phosphoserine.

The protein belongs to the protein kinase superfamily. Tyr protein kinase family. AXL/UFO subfamily. Interacts (upon activation) with TNK2; stimulates TNK2 autophosphorylation. Interacts (via N-terminus) with extracellular ligands LGALS3, TUB, TULP1 and GAS6. Interacts with VAV1 in a phosphotyrosine-independent manner. Interacts with TIMD4; this interaction enhances TIMD4-mediated efferocytosis. Autophosphorylated on Tyr-749, Tyr-753 and Tyr-754 in the activation loop allowing full activity. Autophosphorylated on Tyr-872 leading to recruitment of downstream partners of the signaling cascade such as PLCG2. As to expression, not expressed in normal B- and T-lymphocytes but is expressed in numerous neoplastic B- and T-cell lines. Highly expressed in testis, ovary, prostate, lung, and kidney, with lower expression in spleen, small intestine, colon, and liver.

It is found in the cell membrane. It catalyses the reaction L-tyrosyl-[protein] + ATP = O-phospho-L-tyrosyl-[protein] + ADP + H(+). In terms of biological role, receptor tyrosine kinase that transduces signals from the extracellular matrix into the cytoplasm by binding to several ligands including LGALS3, TUB, TULP1 or GAS6. Regulates many physiological processes including cell survival, migration, differentiation, and phagocytosis of apoptotic cells (efferocytosis). Ligand binding at the cell surface induces autophosphorylation of MERTK on its intracellular domain that provides docking sites for downstream signaling molecules. Following activation by ligand, interacts with GRB2 or PLCG2 and induces phosphorylation of MAPK1, MAPK2, FAK/PTK2 or RAC1. MERTK signaling plays a role in various processes such as macrophage clearance of apoptotic cells, platelet aggregation, cytoskeleton reorganization and engulfment. Functions in the retinal pigment epithelium (RPE) as a regulator of rod outer segments fragments phagocytosis. Also plays an important role in inhibition of Toll-like receptors (TLRs)-mediated innate immune response by activating STAT1, which selectively induces production of suppressors of cytokine signaling SOCS1 and SOCS3. The polypeptide is Tyrosine-protein kinase Mer (MERTK) (Homo sapiens (Human)).